Here is a 407-residue protein sequence, read N- to C-terminus: Phosphopentomutase (407 aa).

Mn(2+)-binding residues include aspartate 10, aspartate 306, histidine 311, aspartate 347, histidine 348, and histidine 359.

The protein belongs to the phosphopentomutase family. Mn(2+) is required as a cofactor.

The protein localises to the cytoplasm. The enzyme catalyses 2-deoxy-alpha-D-ribose 1-phosphate = 2-deoxy-D-ribose 5-phosphate. It catalyses the reaction alpha-D-ribose 1-phosphate = D-ribose 5-phosphate. It functions in the pathway carbohydrate degradation; 2-deoxy-D-ribose 1-phosphate degradation; D-glyceraldehyde 3-phosphate and acetaldehyde from 2-deoxy-alpha-D-ribose 1-phosphate: step 1/2. Functionally, isomerase that catalyzes the conversion of deoxy-ribose 1-phosphate (dRib-1-P) and ribose 1-phosphate (Rib-1-P) to deoxy-ribose 5-phosphate (dRib-5-P) and ribose 5-phosphate (Rib-5-P), respectively. The polypeptide is Phosphopentomutase (Salmonella schwarzengrund (strain CVM19633)).